Consider the following 391-residue polypeptide: uncharacterized protein (391 aa).

A run of 11 helical transmembrane segments spans residues 15 to 35 (LSFCVVFLLRMLGIFSVLPIL), 48 to 68 (FLIGLAVGIYGATQIVFQIPF), 81 to 101 (IIFGLFIFFIGSLIVVSTNSI), 139 to 159 (IIGVSFAVSFLISVVSAPIIA), 167 to 187 (IFWISAVFSIFSILIVFFLIP), 217 to 237 (FYLGVFLLHFLLTMNFLIIPY), 251 to 271 (IVYFATIVFSFFFLFLIVFYF), 275 to 295 (FFLKNIIEICIFFIFLSLLLF), 303 to 323 (ICLTFALQIFFIAFNILEIFF), 346 to 366 (TSQFLGIACGGVLNGLLCTFF), and 369 to 389 (NHIFLFEIFITLIWFIFSFFC).

The protein belongs to the major facilitator superfamily.

Its subcellular location is the cell membrane. This is an uncharacterized protein from Buchnera aphidicola subsp. Schizaphis graminum (strain Sg).